Here is a 305-residue protein sequence, read N- to C-terminus: Elongation factor Ts (305 aa).

The involved in Mg(2+) ion dislocation from EF-Tu stretch occupies residues 79 to 82 (TDFV).

This sequence belongs to the EF-Ts family.

The protein localises to the cytoplasm. In terms of biological role, associates with the EF-Tu.GDP complex and induces the exchange of GDP to GTP. It remains bound to the aminoacyl-tRNA.EF-Tu.GTP complex up to the GTP hydrolysis stage on the ribosome. The sequence is that of Elongation factor Ts from Brucella suis biovar 1 (strain 1330).